A 252-amino-acid polypeptide reads, in one-letter code: Geranylgeranylglyceryl phosphate synthase (252 aa).

Mg(2+) contacts are provided by D26 and S55. Residues 174–180 (YLEAGSG), 205–206 (GG), and 227–228 (GT) contribute to the sn-glycerol 1-phosphate site.

It belongs to the GGGP/HepGP synthase family. Group II subfamily. As to quaternary structure, homotetramer. Homohexamer. Mg(2+) serves as cofactor.

It is found in the cytoplasm. The enzyme catalyses sn-glycerol 1-phosphate + (2E,6E,10E)-geranylgeranyl diphosphate = sn-3-O-(geranylgeranyl)glycerol 1-phosphate + diphosphate. Its pathway is membrane lipid metabolism; glycerophospholipid metabolism. Its function is as follows. Prenyltransferase that catalyzes the transfer of the geranylgeranyl moiety of geranylgeranyl diphosphate (GGPP) to the C3 hydroxyl of sn-glycerol-1-phosphate (G1P). This reaction is the first ether-bond-formation step in the biosynthesis of archaeal membrane lipids. This is Geranylgeranylglyceryl phosphate synthase from Thermococcus kodakarensis (strain ATCC BAA-918 / JCM 12380 / KOD1) (Pyrococcus kodakaraensis (strain KOD1)).